A 655-amino-acid chain; its full sequence is Probable replication factor A 73 kDa subunit (655 aa).

The tract at residues 195-217 (NRAAAPEATRARAVPPPARRTAS) is disordered. Residues 196–207 (RAAAPEATRARA) show a composition bias toward low complexity. The OB DNA-binding region spans 236-326 (FKIHGMVSRK…TLRSDSIIEA (91 aa)). The C4-type zinc finger occupies 518 to 539 (CASEGCQKKLVGENGDYRCEKC).

The protein belongs to the replication factor A protein 1 family. As to quaternary structure, component of the heterotrimeric canonical replication protein A complex (RPA).

The protein localises to the nucleus. Functionally, as part of the heterotrimeric replication protein A complex (RPA/RP-A), binds and stabilizes single-stranded DNA intermediates, that form during DNA replication or upon DNA stress. It prevents their reannealing and in parallel, recruits and activates different proteins and complexes involved in DNA metabolism. Thereby, it plays an essential role both in DNA replication and the cellular response to DNA damage. The chain is Probable replication factor A 73 kDa subunit from Caenorhabditis elegans.